The following is a 268-amino-acid chain: NADH-quinone oxidoreductase subunit B 1 (268 aa).

[4Fe-4S] cluster-binding residues include cysteine 42, cysteine 43, cysteine 108, and cysteine 138.

The protein belongs to the complex I 20 kDa subunit family. As to quaternary structure, NDH-1 is composed of 14 different subunits. Subunits NuoB, C, D, E, F, and G constitute the peripheral sector of the complex. Requires [4Fe-4S] cluster as cofactor.

Its subcellular location is the cell membrane. It catalyses the reaction a quinone + NADH + 5 H(+)(in) = a quinol + NAD(+) + 4 H(+)(out). Functionally, NDH-1 shuttles electrons from NADH, via FMN and iron-sulfur (Fe-S) centers, to quinones in the respiratory chain. The immediate electron acceptor for the enzyme in this species is believed to be ubiquinone. Couples the redox reaction to proton translocation (for every two electrons transferred, four hydrogen ions are translocated across the cytoplasmic membrane), and thus conserves the redox energy in a proton gradient. The chain is NADH-quinone oxidoreductase subunit B 1 from Roseiflexus sp. (strain RS-1).